We begin with the raw amino-acid sequence, 41 residues long: Cytochrome b559 subunit beta (41 aa).

Residues 16–32 (WLAVHALAVPTVFFLGA) traverse the membrane as a helical segment. Heme is bound at residue His20.

It belongs to the PsbE/PsbF family. As to quaternary structure, heterodimer of an alpha subunit and a beta subunit. PSII is composed of 1 copy each of membrane proteins PsbA, PsbB, PsbC, PsbD, PsbE, PsbF, PsbH, PsbI, PsbJ, PsbK, PsbL, PsbM, PsbT, PsbX, PsbY, PsbZ, Psb30/Ycf12, at least 3 peripheral proteins of the oxygen-evolving complex and a large number of cofactors. It forms dimeric complexes. It depends on heme b as a cofactor.

Its subcellular location is the plastid. It localises to the chloroplast thylakoid membrane. This b-type cytochrome is tightly associated with the reaction center of photosystem II (PSII). PSII is a light-driven water:plastoquinone oxidoreductase that uses light energy to abstract electrons from H(2)O, generating O(2) and a proton gradient subsequently used for ATP formation. It consists of a core antenna complex that captures photons, and an electron transfer chain that converts photonic excitation into a charge separation. The sequence is that of Cytochrome b559 subunit beta from Chlorella vulgaris (Green alga).